Reading from the N-terminus, the 316-residue chain is Protoheme IX farnesyltransferase (316 aa).

The next 9 helical transmembrane spans lie at 32 to 52 (VMSLVVFTAFAGLVLAPGQIN), 53 to 73 (PVLGLIAILCIAVGAGASGAL), 93 to 113 (IPAGRIAPSEALAFGLVLSCF), 116 to 136 (AILGLAVNWLSAGILAFTIFF), 152 to 172 (NIVIGGAAGAFPPMIGWACVT), 180 to 200 (TVLFLIIFLWTPAHFWALALF), 226 to 246 (IVAYAVLTAICAVLPSYLGFA), 248 to 268 (FAYGLVAAALGAIFIYCSIAV), and 289 to 309 (IFYLFAIFSALMIDRLAAMLV).

It belongs to the UbiA prenyltransferase family. Protoheme IX farnesyltransferase subfamily.

It is found in the cell inner membrane. The enzyme catalyses heme b + (2E,6E)-farnesyl diphosphate + H2O = Fe(II)-heme o + diphosphate. Its pathway is porphyrin-containing compound metabolism; heme O biosynthesis; heme O from protoheme: step 1/1. Functionally, converts heme B (protoheme IX) to heme O by substitution of the vinyl group on carbon 2 of heme B porphyrin ring with a hydroxyethyl farnesyl side group. The polypeptide is Protoheme IX farnesyltransferase (Rhizobium etli (strain CIAT 652)).